The sequence spans 326 residues: Undecaprenyl-diphosphatase (326 aa).

Transmembrane regions (helical) follow at residues Ala-11 to Ala-31, Thr-42 to Ile-62, Gly-90 to Trp-110, Leu-138 to Val-158, Phe-165 to Leu-185, Ala-212 to Ile-232, Phe-242 to Leu-262, Ile-272 to Trp-292, and Ile-304 to Phe-324.

Belongs to the UppP family.

It is found in the cell inner membrane. It catalyses the reaction di-trans,octa-cis-undecaprenyl diphosphate + H2O = di-trans,octa-cis-undecaprenyl phosphate + phosphate + H(+). In terms of biological role, catalyzes the dephosphorylation of undecaprenyl diphosphate (UPP). Confers resistance to bacitracin. In Synechocystis sp. (strain ATCC 27184 / PCC 6803 / Kazusa), this protein is Undecaprenyl-diphosphatase.